Here is a 1001-residue protein sequence, read N- to C-terminus: UPF0182 protein Mjls_1469 (1001 aa).

Transmembrane regions (helical) follow at residues valine 16–aspartate 36, valine 61–leucine 81, leucine 112–tyrosine 132, phenylalanine 174–isoleucine 194, isoleucine 209–aspartate 229, lysine 258–leucine 278, and isoleucine 286–valine 306. The span at alanine 900–glycine 929 shows a compositional bias: low complexity. The tract at residues alanine 900–serine 977 is disordered.

This sequence belongs to the UPF0182 family.

It localises to the cell membrane. The sequence is that of UPF0182 protein Mjls_1469 from Mycobacterium sp. (strain JLS).